A 161-amino-acid polypeptide reads, in one-letter code: Regulator of ribonuclease activity A (161 aa).

Belongs to the RraA family. Homotrimer. Binds to both RNA-binding sites in the C-terminal region of Rne and to RhlB.

It is found in the cytoplasm. In terms of biological role, globally modulates RNA abundance by binding to RNase E (Rne) and regulating its endonucleolytic activity. Can modulate Rne action in a substrate-dependent manner by altering the composition of the degradosome. Modulates RNA-binding and helicase activities of the degradosome. This is Regulator of ribonuclease activity A from Alteromonas mediterranea (strain DSM 17117 / CIP 110805 / LMG 28347 / Deep ecotype).